The primary structure comprises 237 residues: tRNA1(Val) (adenine(37)-N6)-methyltransferase (237 aa).

The protein belongs to the methyltransferase superfamily. tRNA (adenine-N(6)-)-methyltransferase family.

It is found in the cytoplasm. It carries out the reaction adenosine(37) in tRNA1(Val) + S-adenosyl-L-methionine = N(6)-methyladenosine(37) in tRNA1(Val) + S-adenosyl-L-homocysteine + H(+). Specifically methylates the adenine in position 37 of tRNA(1)(Val) (anticodon cmo5UAC). The sequence is that of tRNA1(Val) (adenine(37)-N6)-methyltransferase from Bacteroides thetaiotaomicron (strain ATCC 29148 / DSM 2079 / JCM 5827 / CCUG 10774 / NCTC 10582 / VPI-5482 / E50).